The sequence spans 78 residues: Exodeoxyribonuclease 7 small subunit (78 aa).

The protein belongs to the XseB family. In terms of assembly, heterooligomer composed of large and small subunits.

It is found in the cytoplasm. It carries out the reaction Exonucleolytic cleavage in either 5'- to 3'- or 3'- to 5'-direction to yield nucleoside 5'-phosphates.. Its function is as follows. Bidirectionally degrades single-stranded DNA into large acid-insoluble oligonucleotides, which are then degraded further into small acid-soluble oligonucleotides. This Paracoccus zeaxanthinifaciens protein is Exodeoxyribonuclease 7 small subunit.